We begin with the raw amino-acid sequence, 381 residues long: Secretion apparatus protein BsaZ (381 aa).

The next 4 helical transmembrane spans lie at 28–48 (IVAL…VDLT), 80–100 (IAAP…LVQS), 134–154 (AVKA…FADL), and 175–195 (IVLT…VLIV). Positions 343 to 381 (NRGGPPREMPPEATHAPDAHGGDAASGGATSAQAGERNA) are disordered. The span at 364–381 (GDAASGGATSAQAGERNA) shows a compositional bias: low complexity.

It belongs to the type III secretion exporter family.

The protein localises to the cell membrane. Part of the bsa type III secretion system, is involved in the intracellular replication of invading bacteria inside the host cell. Probably necessary for the lysis of the vacuole membrane and escape into the host cell cytoplasm. The chain is Secretion apparatus protein BsaZ (bsaZ) from Burkholderia thailandensis (strain ATCC 700388 / DSM 13276 / CCUG 48851 / CIP 106301 / E264).